Here is a 482-residue protein sequence, read N- to C-terminus: Dihydrolipoyllysine-residue acetyltransferase component of pyruvate dehydrogenase complex, mitochondrial (482 aa).

A mitochondrion-targeting transit peptide spans 1–28; it reads MSAFVRVVPRISRSSVLTRSLRLQLRCY. Residues 34–110 enclose the Lipoyl-binding domain; that stretch reads HTIIGMPALS…PVNKPIAVYV (77 aa). An N6-lipoyllysine modification is found at Lys75. The disordered stretch occupies residues 122–170; it reads FKLEDSGSDSKTSTKAQPAEPQAEKKQEAPAEETKTSAPEAKKSDVAAP. Residues 143-166 are compositionally biased toward basic and acidic residues; the sequence is QAEKKQEAPAEETKTSAPEAKKSD. In terms of domain architecture, Peripheral subunit-binding (PSBD) spans 175 to 212; sequence FASPLAKTIALEKGISLKDVHGTGPRGRITKADIESYL. Residues 214 to 251 are disordered; it reads KSSKQSSQTSGAAAATPAAATSSTTAGSAPSPSSTASY. Low complexity predominate over residues 217-250; that stretch reads KQSSQTSGAAAATPAAATSSTTAGSAPSPSSTAS. Active-site residues include His455 and Asp459.

The protein belongs to the 2-oxoacid dehydrogenase family. In terms of assembly, eukaryotic pyruvate dehydrogenase (PDH) complexes are organized as a core consisting of the oligomeric dihydrolipoamide acetyl-transferase (E2), around which are arranged multiple copies of pyruvate dehydrogenase (E1), dihydrolipoamide dehydrogenase (E3) and protein X (E3BP) bound by non-covalent bonds. (R)-lipoate is required as a cofactor.

The protein localises to the mitochondrion matrix. It catalyses the reaction N(6)-[(R)-dihydrolipoyl]-L-lysyl-[protein] + acetyl-CoA = N(6)-[(R)-S(8)-acetyldihydrolipoyl]-L-lysyl-[protein] + CoA. Its function is as follows. The pyruvate dehydrogenase complex catalyzes the overall conversion of pyruvate to acetyl-CoA and CO(2). This chain is Dihydrolipoyllysine-residue acetyltransferase component of pyruvate dehydrogenase complex, mitochondrial (LAT1), found in Saccharomyces cerevisiae (strain ATCC 204508 / S288c) (Baker's yeast).